A 525-amino-acid polypeptide reads, in one-letter code: GMP synthase [glutamine-hydrolyzing] (525 aa).

The region spanning 9-207 (RILILDFGSQ…VLDVCQCEAL (199 aa)) is the Glutamine amidotransferase type-1 domain. C86 functions as the Nucleophile in the catalytic mechanism. Active-site residues include H181 and E183. The GMPS ATP-PPase domain occupies 208–400 (WTPASIIEDT…LGLPYDMLNR (193 aa)). Position 235-241 (235-241 (SGGVDSS)) interacts with ATP.

In terms of assembly, homodimer.

It carries out the reaction XMP + L-glutamine + ATP + H2O = GMP + L-glutamate + AMP + diphosphate + 2 H(+). It functions in the pathway purine metabolism; GMP biosynthesis; GMP from XMP (L-Gln route): step 1/1. In terms of biological role, catalyzes the synthesis of GMP from XMP. The protein is GMP synthase [glutamine-hydrolyzing] of Photorhabdus laumondii subsp. laumondii (strain DSM 15139 / CIP 105565 / TT01) (Photorhabdus luminescens subsp. laumondii).